We begin with the raw amino-acid sequence, 351 residues long: Histidine protein kinase SaeS (351 aa).

2 consecutive transmembrane segments (helical) span residues 9-29 and 40-60; these read IIIGVVSSILLTSTILAIAYI and TLTLTTIITSCLTLLICSIFI. An HAMP domain is found at 61-114; the sequence is NPLIQKIKQFNIKTKQFANGNYASNDKTFNSPKEIYELNQSFNKMASEITQQMN. The region spanning 129-348 is the Histidine kinase domain; sequence NLAHDLKTPL…TMTVTLHKLD (220 aa). His-132 is subject to Phosphohistidine; by autocatalysis.

In terms of processing, autophosphorylated.

The protein resides in the cell membrane. The enzyme catalyses ATP + protein L-histidine = ADP + protein N-phospho-L-histidine.. In terms of biological role, member of the two-component regulatory system SaeR/SaeS involved in the regulation of staphylococcal virulence factors in a strain-dependent fashion. Probably functions as a membrane-associated protein kinase that upon sensing the appropriate signal, autophosphorylates and in turn activates the cytosolic response regulator SaeR. This chain is Histidine protein kinase SaeS (saeS), found in Staphylococcus aureus (strain MRSA252).